The sequence spans 248 residues: Type III pantothenate kinase (248 aa).

Asp6–Lys13 is an ATP binding site. Residues Tyr92 and Gly99 to Arg102 each bind substrate. Residue Asp101 is the Proton acceptor of the active site. A K(+)-binding site is contributed by Asp121. Residue Thr124 participates in ATP binding. Thr180 provides a ligand contact to substrate.

The protein belongs to the type III pantothenate kinase family. Homodimer. It depends on NH4(+) as a cofactor. K(+) is required as a cofactor.

The protein resides in the cytoplasm. It catalyses the reaction (R)-pantothenate + ATP = (R)-4'-phosphopantothenate + ADP + H(+). Its pathway is cofactor biosynthesis; coenzyme A biosynthesis; CoA from (R)-pantothenate: step 1/5. Catalyzes the phosphorylation of pantothenate (Pan), the first step in CoA biosynthesis. The polypeptide is Type III pantothenate kinase (Pseudomonas aeruginosa (strain LESB58)).